Reading from the N-terminus, the 312-residue chain is Ribosomal RNA small subunit methyltransferase H (312 aa).

S-adenosyl-L-methionine contacts are provided by residues 33–35 (GGY), Asp51, Phe78, Asp97, and Gln104.

It belongs to the methyltransferase superfamily. RsmH family.

It is found in the cytoplasm. It carries out the reaction cytidine(1402) in 16S rRNA + S-adenosyl-L-methionine = N(4)-methylcytidine(1402) in 16S rRNA + S-adenosyl-L-homocysteine + H(+). Its function is as follows. Specifically methylates the N4 position of cytidine in position 1402 (C1402) of 16S rRNA. In Orientia tsutsugamushi (strain Ikeda) (Rickettsia tsutsugamushi), this protein is Ribosomal RNA small subunit methyltransferase H.